Reading from the N-terminus, the 390-residue chain is 8-amino-7-oxononanoate synthase (390 aa).

Arginine 20 provides a ligand contact to substrate. 107–108 serves as a coordination point for pyridoxal 5'-phosphate; it reads GF. Histidine 132 contributes to the substrate binding site. Pyridoxal 5'-phosphate is bound by residues serine 179, 204–207, and 235–238; these read DDAH and TLSK. An N6-(pyridoxal phosphate)lysine modification is found at lysine 238. Threonine 352 lines the substrate pocket.

Belongs to the class-II pyridoxal-phosphate-dependent aminotransferase family. BioF subfamily. In terms of assembly, homodimer. Requires pyridoxal 5'-phosphate as cofactor.

The catalysed reaction is 6-carboxyhexanoyl-[ACP] + L-alanine + H(+) = (8S)-8-amino-7-oxononanoate + holo-[ACP] + CO2. It participates in cofactor biosynthesis; biotin biosynthesis. In terms of biological role, catalyzes the decarboxylative condensation of pimeloyl-[acyl-carrier protein] and L-alanine to produce 8-amino-7-oxononanoate (AON), [acyl-carrier protein], and carbon dioxide. In Exiguobacterium sibiricum (strain DSM 17290 / CCUG 55495 / CIP 109462 / JCM 13490 / 255-15), this protein is 8-amino-7-oxononanoate synthase.